The chain runs to 680 residues: MVLHAQPPDQSTETAREAKALAGATDGATATSADLHAPMALSSSSPLRNPFPPIADYAFLSDWETTCLISPAGSVEWLCVPRPDSPSVFGAILDRSAGHFRLGPYGVSVPSARRYLPGSLIMETTWQTHTGWLIVRDALVMGKWHDIERRSRTHRRTPMDWDAEHILLRTVRCVSGTVELMMSCEPAFDYHRLGATWEYSAEAYGEAIARANTEPDAHPTLRLTTNLRIGLEGREARARTRMKEGDDVFVALSWTKHPPPQTYDEAADKMWQTTECWRQWINIGNFPDHPWRAYLQRSALTLKGLTYSPTGALLAASTTSLPETPRGERNWDYRYAWIRDSTFALWGLYTLGLDREADDFFAFIADVSGANNNERHPLQVMYGVGGERSLVEAELHHLSGYDHARPVRIGNGAYNQRQHDIWGSILDSFYLHAKSREQVPENLWPVLKRQVEEAIKHWREPDRGIWEVRGEPQHFTSSKVMCWVALDRGAKLAERQGEKSYAQQWRAIADEIKADILEHGVDSRGVFTQRYGDEALDASLLLVVLTRFLPPDDPRVRNTVLAIADELTEDGLVLRYRVHETDDGLSGEEGTFTICSFWLVSALVEIGEVGRAKRLCERLLSFASPLLLYAEEIEPRSGRHLGNFPQAFTHLALINAVVHVIRAEEEADSSGMFQPANAPM.

Residues 1-27 form a disordered region; that stretch reads MVLHAQPPDQSTETAREAKALAGATDG.

It belongs to the glycosyl hydrolase 15 family. In terms of assembly, homomultimer. Phosphate serves as cofactor.

It catalyses the reaction alpha,alpha-trehalose + H2O = alpha-D-glucose + beta-D-glucose. It participates in glycan degradation; trehalose degradation; D-glucose from alpha,alpha-trehalose: step 1/1. In terms of biological role, catalyzes the hydrolysis of alpha,alpha-trehalose into two molecules of D-glucose. The chain is Trehalase from Mycobacterium tuberculosis (strain ATCC 25618 / H37Rv).